The following is a 476-amino-acid chain: Cytochrome c oxidase subunit 1 (476 aa).

A helical transmembrane segment spans residues 19 to 39 (LYYLWFSFLFGTYGFLLSVIL). Residue Glu-42 coordinates Ca(2+). 8 consecutive transmembrane segments (helical) span residues 61–81 (MIFTIHGIIMIFFNIMPGLFG), 105–125 (ISLLLQPIAFILVILSTAAEF), 144–164 (LSPVAVDVIIIGLLVSGIASI), 194–214 (IIITSIMLLLTLPVLTGGVLM), 240–260 (LFWFFGHPEVYILILPAFGVI), 278–298 (MILAMGCIAVLGSVVWVHHMY), 309–329 (FFTSTTILISIPTGTKVFNWL), and 345–365 (LLCLLFICTFTFGGTTGVILG). Residue His-66 participates in Fe(II)-heme a binding. His-246 provides a ligand contact to Cu cation. The segment at residues 246–250 (HPEVY) is a cross-link (1'-histidyl-3'-tyrosine (His-Tyr)). An O2-binding site is contributed by Tyr-250. His-295 and His-296 together coordinate Cu cation. Residues His-374 and Asp-375 each contribute to the Mg(2+) site. A run of 2 helical transmembrane segments spans residues 379–399 (VIAHFHFVLSIGAIIALFTCV) and 415–435 (TLIVLWSILFFIGVILTFLPM). His-382 is a heme a3 binding site. Fe(II)-heme a is bound at residue His-384. Residue Pro-448 coordinates Ca(2+). A helical membrane pass occupies residues 455–475 (NGWNMICSIGSTMTLFGLLIF).

The protein belongs to the heme-copper respiratory oxidase family. As to quaternary structure, component of the cytochrome c oxidase (complex IV, CIV), a multisubunit enzyme composed of a catalytic core of 3 subunits and several supernumerary subunits. The complex exists as a monomer or a dimer and forms supercomplexes (SCs) in the inner mitochondrial membrane with ubiquinol-cytochrome c oxidoreductase (cytochrome b-c1 complex, complex III, CIII). Requires heme as cofactor. The cofactor is Cu cation.

The protein localises to the mitochondrion inner membrane. The enzyme catalyses 4 Fe(II)-[cytochrome c] + O2 + 8 H(+)(in) = 4 Fe(III)-[cytochrome c] + 2 H2O + 4 H(+)(out). Its pathway is energy metabolism; oxidative phosphorylation. Component of the cytochrome c oxidase, the last enzyme in the mitochondrial electron transport chain which drives oxidative phosphorylation. The respiratory chain contains 3 multisubunit complexes succinate dehydrogenase (complex II, CII), ubiquinol-cytochrome c oxidoreductase (cytochrome b-c1 complex, complex III, CIII) and cytochrome c oxidase (complex IV, CIV), that cooperate to transfer electrons derived from NADH and succinate to molecular oxygen, creating an electrochemical gradient over the inner membrane that drives transmembrane transport and the ATP synthase. Cytochrome c oxidase is the component of the respiratory chain that catalyzes the reduction of oxygen to water. Electrons originating from reduced cytochrome c in the intermembrane space (IMS) are transferred via the dinuclear copper A center (CU(A)) of subunit 2 and heme A of subunit 1 to the active site in subunit 1, a binuclear center (BNC) formed by heme A3 and copper B (CU(B)). The BNC reduces molecular oxygen to 2 water molecules using 4 electrons from cytochrome c in the IMS and 4 protons from the mitochondrial matrix. The polypeptide is Cytochrome c oxidase subunit 1 (COI) (Plasmodium berghei).